The sequence spans 153 residues: Small heat shock protein HspB (153 aa).

The sHSP domain maps to 30-140; the sequence is AGTEDNYPPC…KPRRISISGS (111 aa).

This sequence belongs to the small heat shock protein (HSP20) family.

The polypeptide is Small heat shock protein HspB (hspB) (Bradyrhizobium diazoefficiens (strain JCM 10833 / BCRC 13528 / IAM 13628 / NBRC 14792 / USDA 110)).